The following is a 183-amino-acid chain: Orotate phosphoribosyltransferase (183 aa).

Residues arginine 21, lysine 88, and 112–120 contribute to the 5-phospho-alpha-D-ribose 1-diphosphate site; that span reads EDVVTTGES. Orotate contacts are provided by threonine 116 and arginine 144.

Belongs to the purine/pyrimidine phosphoribosyltransferase family. PyrE subfamily. Homodimer. Mg(2+) is required as a cofactor.

It carries out the reaction orotidine 5'-phosphate + diphosphate = orotate + 5-phospho-alpha-D-ribose 1-diphosphate. Its pathway is pyrimidine metabolism; UMP biosynthesis via de novo pathway; UMP from orotate: step 1/2. Functionally, catalyzes the transfer of a ribosyl phosphate group from 5-phosphoribose 1-diphosphate to orotate, leading to the formation of orotidine monophosphate (OMP). In Thermus thermophilus (strain ATCC BAA-163 / DSM 7039 / HB27), this protein is Orotate phosphoribosyltransferase.